We begin with the raw amino-acid sequence, 228 residues long: Eukaryotic translation initiation factor 4E-1 (228 aa).

The segment covering 1–19 (MATAEMEKTTTFDEAEKVK) has biased composition (basic and acidic residues). The tract at residues 1-33 (MATAEMEKTTTFDEAEKVKLNANEADDEVEEGE) is disordered. Positions 24–33 (EADDEVEEGE) are enriched in acidic residues. EIF4G-binding regions lie at residues 53 to 56 (HPLE) and 63 to 99 (FDNP…NNIH). Residues 71 to 76 (KQAAWG), K103, and 121 to 122 (WE) contribute to the mRNA site. Cysteines 126 and 164 form a disulfide. Positions 147 to 156 (YTLLAMIGHQ) are EIF4G-binding. MRNA is bound by residues 171–176 (RGKGEK) and 216–220 (KRLDR).

The protein belongs to the eukaryotic initiation factor 4E family. As to quaternary structure, EIF4F is a multi-subunit complex, the composition of which varies with external and internal environmental conditions. It is composed of at least EIF4A, EIF4E and EIF4G. EIF4E is also known to interact with other partners. In higher plants two isoforms of EIF4F have been identified, named isoform EIF4F and isoform EIF(iso)4F. Isoform EIF4F has subunits p220 and p26, whereas isoform EIF(iso)4F has subunits p82 and p28. (Microbial infection) Interacts with potyvirus viral genome-linked protein (VPg); this interaction is possible in susceptible hosts but is impaired in resistant plants. Thus the VPg of tobacco etch virus (TEV) strain HAT interacts with susceptible alleles pvr2(+), pvr2(3) and pvr2(9) but not with the resistant allele pvr2(2), the VPg of TEV strain CAA10 interacts with susceptible alleles pvr2(+), pvr2(2), pvr2(3) and pvr2(9), the VPg of potato virus Y (PVY) strain LYE84 interacts with tomato eIF4E1 and eIF4E2 as well as with the Capsicum annuum eIF4E1 susceptible allele pvr2(+) but not with resistant alleles pvr2(1), pvr2(2), pvr2(3), pvr2(4), pvr2(5), pvr2(6), pvr2(7), pvr2(8) and pvr2(9) and the VPg of PVY strain SON41 interacts with C.annuum eIF4E1 susceptible alleles pvr2(+), pvr2(1), pvr2(2), pvr2(3) and pvr2(4) but not with resistant alleles pvr2(5), pvr2(6), pvr2(7), pvr2(8) and pvr2(9). In addition, the susceptible allele pvr1(+) interacts strongly with TEV strains HAT and NW VPg while resistance alleles (pvr1, pvr1(1), and pvr1(2)) fail to bind TEV VPg. In terms of processing, according to the redox status, the Cys-126-Cys-164 disulfide bridge may have a role in regulating protein function by affecting its ability to bind capped mRNA.

It localises to the nucleus. The protein localises to the cytoplasm. In terms of biological role, component of the protein complex eIF4F, which is involved in the recognition of the mRNA cap, ATP-dependent unwinding of 5'-terminal secondary structure and recruitment of mRNA to the ribosome. Recognizes and binds the 7-methylguanosine-containing mRNA cap during an early step in the initiation of protein synthesis and facilitates ribosome binding by inducing the unwinding of the mRNAs secondary structures. Key component of recessive resistance to potyviruses. (Microbial infection) Susceptibility host factor required for viral infection (e.g. potato virus Y (PVY) and tobacco etch virus (TEV)) by recruiting viral RNAs to the host ribosomal complex via an interaction with viral genome-linked protein (VPg). The polypeptide is Eukaryotic translation initiation factor 4E-1 (Capsicum annuum (Capsicum pepper)).